The sequence spans 819 residues: DNA topoisomerase 4 subunit A (819 aa).

Residues 30–496 (LPDIRDGLKP…QIIEIDTASL (467 aa)) enclose the Topo IIA-type catalytic domain. The O-(5'-phospho-DNA)-tyrosine intermediate role is filled by tyrosine 118.

The protein belongs to the type II topoisomerase GyrA/ParC subunit family. ParC type 2 subfamily. In terms of assembly, heterotetramer composed of ParC and ParE.

It is found in the cell membrane. It catalyses the reaction ATP-dependent breakage, passage and rejoining of double-stranded DNA.. In terms of biological role, topoisomerase IV is essential for chromosome segregation. It relaxes supercoiled DNA. Performs the decatenation events required during the replication of a circular DNA molecule. This is DNA topoisomerase 4 subunit A from Streptococcus pyogenes serotype M6 (strain ATCC BAA-946 / MGAS10394).